A 215-amino-acid chain; its full sequence is Probable nicotinate-nucleotide adenylyltransferase (215 aa).

It belongs to the NadD family.

It catalyses the reaction nicotinate beta-D-ribonucleotide + ATP + H(+) = deamido-NAD(+) + diphosphate. Its pathway is cofactor biosynthesis; NAD(+) biosynthesis; deamido-NAD(+) from nicotinate D-ribonucleotide: step 1/1. Catalyzes the reversible adenylation of nicotinate mononucleotide (NaMN) to nicotinic acid adenine dinucleotide (NaAD). This chain is Probable nicotinate-nucleotide adenylyltransferase, found in Coxiella burnetii (strain Dugway 5J108-111).